A 93-amino-acid chain; its full sequence is Large ribosomal subunit protein uL23 (93 aa).

It belongs to the universal ribosomal protein uL23 family. As to quaternary structure, part of the 50S ribosomal subunit. Contacts protein L29, and trigger factor when it is bound to the ribosome.

Functionally, one of the early assembly proteins it binds 23S rRNA. One of the proteins that surrounds the polypeptide exit tunnel on the outside of the ribosome. Forms the main docking site for trigger factor binding to the ribosome. This Natranaerobius thermophilus (strain ATCC BAA-1301 / DSM 18059 / JW/NM-WN-LF) protein is Large ribosomal subunit protein uL23.